The following is a 191-amino-acid chain: Guanylate kinase (191 aa).

Residues 9–187 (GQLIVITGPS…SLIALETAIF (179 aa)) enclose the Guanylate kinase-like domain. Residue 16-23 (GPSGVGKG) coordinates ATP.

The protein belongs to the guanylate kinase family.

The protein resides in the cytoplasm. It catalyses the reaction GMP + ATP = GDP + ADP. Functionally, essential for recycling GMP and indirectly, cGMP. The protein is Guanylate kinase of Thermosynechococcus vestitus (strain NIES-2133 / IAM M-273 / BP-1).